The primary structure comprises 164 residues: Thiol peroxidase (164 aa).

Residues 18-163 enclose the Thioredoxin domain; the sequence is VNEGDIAPNF…FEAALKAYRN (146 aa). Cys-60 serves as the catalytic Cysteine sulfenic acid (-SOH) intermediate. Cys-60 and Cys-93 form a disulfide bridge.

This sequence belongs to the peroxiredoxin family. Tpx subfamily. As to quaternary structure, homodimer.

It catalyses the reaction a hydroperoxide + [thioredoxin]-dithiol = an alcohol + [thioredoxin]-disulfide + H2O. Thiol-specific peroxidase that catalyzes the reduction of hydrogen peroxide and organic hydroperoxides to water and alcohols, respectively. Plays a role in cell protection against oxidative stress by detoxifying peroxides. This Staphylococcus epidermidis (strain ATCC 35984 / DSM 28319 / BCRC 17069 / CCUG 31568 / BM 3577 / RP62A) protein is Thiol peroxidase.